A 748-amino-acid chain; its full sequence is MFEATATIDNGSFGTRTIRFETGRLAQQAAGAVVAYLDDENMLLSATTASKSPKEHFDFFPLTVDVEERMYAAGRIPGSFFRREGRPSTDAILTCRLIDRPLRPSFVDGLRNEIQVVVTILSLDPNDLYDVLAINAASASTQLGGLPFSGPIGGVRVALIDGTWVAFPTVEQLERAVFDMVVAGRKVDGADGPDVAIMMVEAEATSNVIELIDGGAQAPTETVVAQGLEAAKPFIEVLCTAQQELADKAARPTSDYPTFPDYGDDVYYSVASVATDELSKALTIGGKAERDARTDELKAEVLARLAETYEGREKEVSAAFRSLTKKLVRQRILTDHFRIDGRGITDIRALSAEVAVVPRAHGSALFQRGETQILGVTTLDMVKMAQQIDSLGPETTKRYMHHYNFPPFSTGETGRVGSPKRREIGHGALAERALVPVLPSLEDFPYAIRQVSEALGSNGSTSMGSVCASTLALLNAGVPLKAPVAGIAMGLVSDDIEVEAGDGTKSLERRFVTLTDILGAEDAFGDMDFKVAGTKDFVTALQLDTKLDGIPSQVLAGALSQAKDARLTILEVMAEAIDEPDEMSPYAPRVTTIRVPVDKIGEVIGPKGKIINAITEETGAQISIEDDGTVFVGATDGPSAQAAIDRINAIANPQLPTVGERFLGTVVKTTDFGAFVSLLPGRDGLVHISKLGKGKRIAKVEDVVNVGDKLRVEIADIDKRGKISLVLVEEDNSAPADAPAAAPADATS.

2 residues coordinate Mg(2+): D522 and D528. The 60-residue stretch at 588–647 (PRVTTIRVPVDKIGEVIGPKGKIINAITEETGAQISIEDDGTVFVGATDGPSAQAAIDRI) folds into the KH domain. Positions 659-728 (GERFLGTVVK…KRGKISLVLV (70 aa)) constitute an S1 motif domain.

The protein belongs to the polyribonucleotide nucleotidyltransferase family. Mg(2+) serves as cofactor.

It localises to the cytoplasm. The catalysed reaction is RNA(n+1) + phosphate = RNA(n) + a ribonucleoside 5'-diphosphate. Functionally, involved in mRNA degradation. Catalyzes the phosphorolysis of single-stranded polyribonucleotides processively in the 3'- to 5'-direction. This Mycobacterium avium (strain 104) protein is Polyribonucleotide nucleotidyltransferase.